Here is a 692-residue protein sequence, read N- to C-terminus: Glycine--tRNA ligase beta subunit (692 aa).

This sequence belongs to the class-II aminoacyl-tRNA synthetase family. Tetramer of two alpha and two beta subunits.

The protein localises to the cytoplasm. It catalyses the reaction tRNA(Gly) + glycine + ATP = glycyl-tRNA(Gly) + AMP + diphosphate. The polypeptide is Glycine--tRNA ligase beta subunit (Pseudoalteromonas atlantica (strain T6c / ATCC BAA-1087)).